Consider the following 498-residue polypeptide: Cyclin-L1 (498 aa).

Cyclin-like stretches follow at residues 68-169 and 182-266; these read ERIQ…RILK and KIIV…NTMK. The interval 294 to 498 is disordered; the sequence is LKARGQNPNG…SGHSHSRHRR (205 aa). Over residues 311–320 the composition is skewed to polar residues; it reads NGFSPASKPS. The span at 321–341 shows a compositional bias: basic and acidic residues; the sequence is SPRDVKMDDKSPNSKLKEPEN. The tract at residues 366–396 is RS; the sequence is KNHSRSRSRSTSRSPHRHRRSHSGTYSSHSS. Over residues 367–387 the composition is skewed to basic residues; sequence NHSRSRSRSTSRSPHRHRRSH. Low complexity predominate over residues 388–402; the sequence is SGTYSSHSSHSPSPR. 2 positions are modified to phosphoserine: serine 409 and serine 412. Over residues 415 to 426 the composition is skewed to basic and acidic residues; sequence RTDRDRPSETSR. The span at 427–440 shows a compositional bias: basic residues; it reads HSNKRRRSRSRSRS. Residues 441 to 478 show a composition bias toward basic and acidic residues; that stretch reads NSRERVRDRDHIKHKQERSGSGHHWDHRDRERDRSRDH. The span at 479-498 shows a compositional bias: basic residues; sequence GRNKRQSRSHSGHSHSRHRR.

It belongs to the cyclin family. Cyclin L subfamily.

The protein localises to the nucleus speckle. It is found in the nucleus. The protein resides in the nucleoplasm. Functionally, involved in pre-mRNA splicing. The sequence is that of Cyclin-L1 (ccnl1) from Danio rerio (Zebrafish).